A 429-amino-acid chain; its full sequence is Probable M18 family aminopeptidase 2 (429 aa).

Positions 82, 156, and 401 each coordinate Zn(2+).

It belongs to the peptidase M18 family. Zn(2+) serves as cofactor.

In Pseudomonas putida (strain GB-1), this protein is Probable M18 family aminopeptidase 2.